The sequence spans 360 residues: Phospho-N-acetylmuramoyl-pentapeptide-transferase (360 aa).

A run of 10 helical transmembrane segments spans residues 25–45 (RGIL…PWLI), 74–94 (MGGA…ADLA), 97–117 (YVWV…VDDY), 132–152 (WKYF…YMTA), 168–188 (IEIP…VGSS), 199–219 (GLAI…CYLS), 236–256 (SGEL…FLWF), 263–283 (VFMG…IAVI), 288–308 (VVLF…MIQV), and 338–358 (VIVR…ATLK).

This sequence belongs to the glycosyltransferase 4 family. MraY subfamily. Mg(2+) is required as a cofactor.

The protein localises to the cell inner membrane. It carries out the reaction UDP-N-acetyl-alpha-D-muramoyl-L-alanyl-gamma-D-glutamyl-meso-2,6-diaminopimeloyl-D-alanyl-D-alanine + di-trans,octa-cis-undecaprenyl phosphate = di-trans,octa-cis-undecaprenyl diphospho-N-acetyl-alpha-D-muramoyl-L-alanyl-D-glutamyl-meso-2,6-diaminopimeloyl-D-alanyl-D-alanine + UMP. It participates in cell wall biogenesis; peptidoglycan biosynthesis. Catalyzes the initial step of the lipid cycle reactions in the biosynthesis of the cell wall peptidoglycan: transfers peptidoglycan precursor phospho-MurNAc-pentapeptide from UDP-MurNAc-pentapeptide onto the lipid carrier undecaprenyl phosphate, yielding undecaprenyl-pyrophosphoryl-MurNAc-pentapeptide, known as lipid I. The polypeptide is Phospho-N-acetylmuramoyl-pentapeptide-transferase (Stutzerimonas stutzeri (strain A1501) (Pseudomonas stutzeri)).